We begin with the raw amino-acid sequence, 352 residues long: C-C chemokine receptor type 5 (352 aa).

Residues 1–30 (MDYQVSSPTYDIDYYTSEPCQKVNVKQIAA) lie on the Extracellular side of the membrane. Residue Y3 is modified to Sulfotyrosine. O-linked (GalNAc...) serine glycans are attached at residues S6 and S7. 3 positions are modified to sulfotyrosine: Y10, Y14, and Y15. 2 disulfide bridges follow: C20–C269 and C101–C178. The helical transmembrane segment at 31-58 (RLLPPLYSLVFIFGFVGNILVVLILINC) threads the bilayer. Residues 59 to 68 (KRLKSMTDIY) lie on the Cytoplasmic side of the membrane. The chain crosses the membrane as a helical span at residues 69–89 (LLNLAISDLFFLLTVPFWAHY). Residues 90-102 (AAAQWDFGNTMCQ) lie on the Extracellular side of the membrane. Residues 103–124 (LLTGLYFIGFFSGIFFIILLTI) form a helical membrane-spanning segment. Topologically, residues 125–141 (DRYLAIVHAVFALKART) are cytoplasmic. A helical transmembrane segment spans residues 142 to 166 (VTFGVVTSVITWVVAVFASLPGIIF). Topologically, residues 167-198 (TRSQREGLHYTCSSHFPYSQYQFWKNFQTLKI) are extracellular. A helical membrane pass occupies residues 199-218 (VILGLVLPLLVMVICYSGIL). Topologically, residues 219–235 (KTLLRCRNEKKRHRAVR) are cytoplasmic. The helical transmembrane segment at 236 to 260 (LIFTIMIVYFLFWAPYNIVLLLNTF) threads the bilayer. The Extracellular segment spans residues 261–277 (QEFFGLNNCSSSNRLDQ). A helical transmembrane segment spans residues 278–301 (AMQVTETLGMTHCCINPIIYAFVG). The Cytoplasmic segment spans residues 302-352 (EKFRNYLLVFFQKHIAKRFCKCCYIFQQEAPERASSVYTRSTGEQEISVGL). 3 S-palmitoyl cysteine lipidation sites follow: C321, C323, and C324. 4 positions are modified to phosphoserine; by BARK1: S336, S337, S342, and S349.

The protein belongs to the G-protein coupled receptor 1 family. Interacts with PRAF2. Efficient ligand binding to CCL3/MIP-1alpha and CCL4/MIP-1beta requires sulfation, O-glycosylation and sialic acid modifications. Glycosylation on Ser-6 is required for efficient binding of CCL4. Interacts with GRK2. Interacts with ARRB1 and ARRB2. Interacts with CNIH4. Interacts with S100A4; this interaction stimulates T-lymphocyte chemotaxis. Sulfated on at least 2 of the N-terminal tyrosines. Sulfation is required for efficient binding of the chemokines, CCL3 and CCL4. Post-translationally, palmitoylation in the C-terminal is important for cell surface expression. In terms of processing, phosphorylation on serine residues in the C-terminal is stimulated by binding CC chemokines especially by APO-RANTES. O-glycosylated, but not N-glycosylated. Ser-6 appears to be the major site even if Ser-7 may be also O-glycosylated. Also sialylated glycans present which contribute to chemokine binding. Thr-16 and Ser-17 may also be glycosylated and, if so, with small moieties such as a T-antigen.

The protein localises to the cell membrane. Its function is as follows. Receptor for a number of inflammatory CC-chemokines including CCL3/MIP-1-alpha, CCL4/MIP-1-beta and RANTES and subsequently transduces a signal by increasing the intracellular calcium ion level. May play a role in the control of granulocytic lineage proliferation or differentiation. Participates in T-lymphocyte migration to the infection site by acting as a chemotactic receptor. This is C-C chemokine receptor type 5 (CCR5) from Rhinopithecus bieti (Black snub-nosed monkey).